We begin with the raw amino-acid sequence, 395 residues long: S-adenosylmethionine synthase (395 aa).

An ATP-binding site is contributed by His-18. Asp-20 contributes to the Mg(2+) binding site. Glu-46 is a K(+) binding site. L-methionine contacts are provided by Glu-59 and Gln-103. The interval Gln-103–Ala-113 is flexible loop. ATP is bound by residues Asp-170–Lys-172, Lys-235–Phe-236, Asp-244, Arg-250–Lys-251, Ala-267, and Lys-271. Asp-244 contributes to the L-methionine binding site. An L-methionine-binding site is contributed by Lys-275.

The protein belongs to the AdoMet synthase family. Homotetramer; dimer of dimers. Mg(2+) serves as cofactor. Requires K(+) as cofactor.

The protein localises to the cytoplasm. It catalyses the reaction L-methionine + ATP + H2O = S-adenosyl-L-methionine + phosphate + diphosphate. It functions in the pathway amino-acid biosynthesis; S-adenosyl-L-methionine biosynthesis; S-adenosyl-L-methionine from L-methionine: step 1/1. In terms of biological role, catalyzes the formation of S-adenosylmethionine (AdoMet) from methionine and ATP. The overall synthetic reaction is composed of two sequential steps, AdoMet formation and the subsequent tripolyphosphate hydrolysis which occurs prior to release of AdoMet from the enzyme. The protein is S-adenosylmethionine synthase of Acidiphilium cryptum (strain JF-5).